The sequence spans 505 residues: Maturase K (505 aa).

It belongs to the intron maturase 2 family. MatK subfamily.

It localises to the plastid. Its subcellular location is the chloroplast. In terms of biological role, usually encoded in the trnK tRNA gene intron. Probably assists in splicing its own and other chloroplast group II introns. In Micranthes integrifolia (Wholeleaf saxifrage), this protein is Maturase K.